We begin with the raw amino-acid sequence, 209 residues long: Thymidine kinase (209 aa).

ATP is bound by residues 9–16 (SAMNAGKT) and 88–91 (DEAQ). Glutamate 89 (proton acceptor) is an active-site residue.

The protein belongs to the thymidine kinase family. In terms of assembly, homotetramer.

The protein resides in the cytoplasm. The catalysed reaction is thymidine + ATP = dTMP + ADP + H(+). This chain is Thymidine kinase, found in Xanthomonas oryzae pv. oryzae (strain MAFF 311018).